A 94-amino-acid polypeptide reads, in one-letter code: Putative pterin-4-alpha-carbinolamine dehydratase (94 aa).

The protein belongs to the pterin-4-alpha-carbinolamine dehydratase family.

The enzyme catalyses (4aS,6R)-4a-hydroxy-L-erythro-5,6,7,8-tetrahydrobiopterin = (6R)-L-erythro-6,7-dihydrobiopterin + H2O. The protein is Putative pterin-4-alpha-carbinolamine dehydratase of Mycolicibacterium smegmatis (strain ATCC 700084 / mc(2)155) (Mycobacterium smegmatis).